Consider the following 201-residue polypeptide: Recombination protein RecR (201 aa).

The C4-type zinc-finger motif lies at 60-75 (CQICGNIDTRDPCTIC). Residues 83-178 (TLLVVVETVA…KITRLAHGVP (96 aa)) enclose the Toprim domain.

This sequence belongs to the RecR family.

Functionally, may play a role in DNA repair. It seems to be involved in an RecBC-independent recombinational process of DNA repair. It may act with RecF and RecO. This is Recombination protein RecR from Beijerinckia indica subsp. indica (strain ATCC 9039 / DSM 1715 / NCIMB 8712).